Consider the following 458-residue polypeptide: MKKLWGGRFTKTAAQWVDDFGASIHFDQQLVEEDIEGSIAHVTMLGECGILPKEDVETIKKGLTKLLEKAKRGELSFSVTYEDIHLNIEKMLIDEIGPVGGKLHTGRSRNDQVATDMHLYLRKRVIEIIELIRQLQRVLVEKAEQHIETLIPGYTHLQRAQPISFAHHLMAYVWMFERDRERFAESLKRMNKSPLGAGALAGTTFPIDRHLTARLLGFDGIYENSLDAVSDRDFIIEFLSNSSILMMHLSRFCEELILWSSQEFQFIEMDDTFATGSSIMPQKKNPDMAELIRGKTGRVYGHLMALLTVMKGLPLAYNKDMQEDKEGMFDTVQTVIGSLNIFAGMIETMTIRTDVMEKATKQDFSNATELADYLAKKGVPFREAHEIVGKLVLTCIERGVFLADLPLHVYQQASPLFEEDIYEALNPYTAVNRRTSAGGTGFTEVKKAIEKAKQMIEA.

Belongs to the lyase 1 family. Argininosuccinate lyase subfamily.

The protein resides in the cytoplasm. The enzyme catalyses 2-(N(omega)-L-arginino)succinate = fumarate + L-arginine. It participates in amino-acid biosynthesis; L-arginine biosynthesis; L-arginine from L-ornithine and carbamoyl phosphate: step 3/3. The protein is Argininosuccinate lyase of Anoxybacillus flavithermus (strain DSM 21510 / WK1).